A 471-amino-acid polypeptide reads, in one-letter code: Glutamate--tRNA ligase (471 aa).

The short motif at 9–19 (PSPTGYLHVGG) is the 'HIGH' region element. Residues Cys98, Cys100, Cys125, and Asp127 each coordinate Zn(2+). The short motif at 237 to 241 (KLSKR) is the 'KMSKS' region element. Position 240 (Lys240) interacts with ATP.

It belongs to the class-I aminoacyl-tRNA synthetase family. Glutamate--tRNA ligase type 1 subfamily. Monomer. Zn(2+) is required as a cofactor.

The protein localises to the cytoplasm. It catalyses the reaction tRNA(Glu) + L-glutamate + ATP = L-glutamyl-tRNA(Glu) + AMP + diphosphate. In terms of biological role, catalyzes the attachment of glutamate to tRNA(Glu) in a two-step reaction: glutamate is first activated by ATP to form Glu-AMP and then transferred to the acceptor end of tRNA(Glu). The sequence is that of Glutamate--tRNA ligase from Yersinia pestis.